Consider the following 319-residue polypeptide: Glutathione synthetase (319 aa).

The ATP-grasp domain occupies 129-314 (KLAILNFSRF…VAAMFADAVA (186 aa)). ATP is bound at residue 155 to 211 (LKEHGDIIIKPLDGMGGMGIFRLTEKDPNIGSILETLMQLDSRTIMAQRYIPEIVHG). Mg(2+)-binding residues include E285 and N287.

This sequence belongs to the prokaryotic GSH synthase family. It depends on Mg(2+) as a cofactor. The cofactor is Mn(2+).

It carries out the reaction gamma-L-glutamyl-L-cysteine + glycine + ATP = glutathione + ADP + phosphate + H(+). The protein operates within sulfur metabolism; glutathione biosynthesis; glutathione from L-cysteine and L-glutamate: step 2/2. The chain is Glutathione synthetase from Neisseria meningitidis serogroup B (strain ATCC BAA-335 / MC58).